We begin with the raw amino-acid sequence, 198 residues long: Segregation and condensation protein B (198 aa).

It belongs to the ScpB family. Homodimer. Homodimerization may be required to stabilize the binding of ScpA to the Smc head domains. Component of a cohesin-like complex composed of ScpA, ScpB and the Smc homodimer, in which ScpA and ScpB bind to the head domain of Smc. The presence of the three proteins is required for the association of the complex with DNA.

The protein localises to the cytoplasm. Participates in chromosomal partition during cell division. May act via the formation of a condensin-like complex containing Smc and ScpA that pull DNA away from mid-cell into both cell halves. This is Segregation and condensation protein B from Streptococcus mutans serotype c (strain ATCC 700610 / UA159).